Reading from the N-terminus, the 50-residue chain is Thymosin beta-4 (50 aa).

The tract at residues 1-50 (MLLPATMSDKPDMAEIEKFDKSKLKKTETQEKNPLPSKETIEQEKQAGES) is disordered. A Phosphoserine modification is found at Ser-8. The segment covering 9–31 (DKPDMAEIEKFDKSKLKKTETQE) has biased composition (basic and acidic residues). Lys-10 carries the N6-acetyllysine modification. N6-acetyllysine; alternate is present on Lys-18. A Glycyl lysine isopeptide (Lys-Gly) (interchain with G-Cter in SUMO2); alternate cross-link involves residue Lys-18. Phosphothreonine is present on Thr-29. Position 32 is an N6-acetyllysine (Lys-32). At Ser-37 the chain carries Phosphoserine. The residue at position 38 (Lys-38) is an N6-acetyllysine. The segment covering 39 to 50 (ETIEQEKQAGES) has biased composition (basic and acidic residues). Thr-40 is modified (phosphothreonine). Lys-45 is subject to N6-acetyllysine.

The protein belongs to the thymosin beta family. As to quaternary structure, identified in a complex composed of ACTA1, COBL, GSN AND TMSB4X. Interacts with SERPINB1. AcSDKP is inactivated by ACE, which removes the dipeptide Lys-Pro from its C-terminus. Originally found in thymus but it is widely distributed in many tissues.

Its subcellular location is the cytoplasm. The protein resides in the cytoskeleton. Functionally, plays an important role in the organization of the cytoskeleton. Binds to and sequesters actin monomers (G actin) and therefore inhibits actin polymerization. In terms of biological role, potent inhibitor of bone marrow derived stem cell differentiation. Acts by inhibits the entry of hematopoietic pluripotent stem cells into the S-phase. This is Thymosin beta-4 (Tmsb4x) from Mus musculus (Mouse).